Reading from the N-terminus, the 111-residue chain is Secreted RxLR effector protein 81 (111 aa).

Residues 1 to 16 form the signal peptide; sequence MLVSMLLIIFPNGVSL. An N-linked (GlcNAc...) asparagine glycan is attached at N52. Residues 73-92 are disordered; the sequence is KKFSSSDEDKSRDVRRRLRP. Positions 88-91 match the RxLR-dEER motif; it reads RRLR.

This sequence belongs to the RxLR effector family.

The protein localises to the secreted. The protein resides in the host nucleus. It localises to the host cytoplasm. In terms of biological role, secreted effector that partially suppresses the host cell death induced by cell death-inducing proteins. This is Secreted RxLR effector protein 81 from Plasmopara viticola (Downy mildew of grapevine).